The sequence spans 335 residues: Aliphatic sulfonates import ATP-binding protein SsuB (335 aa).

The interval 48–71 (PFASGGAFGRAPRDDDDDRRGAGD) is disordered. Residues 74 to 293 (VRLTRVSKRY…ARASAAFAEL (220 aa)) form the ABC transporter domain. Residue 106–113 (GRSGCGKS) participates in ATP binding.

Belongs to the ABC transporter superfamily. Aliphatic sulfonates importer (TC 3.A.1.17.2) family. As to quaternary structure, the complex is composed of two ATP-binding proteins (SsuB), two transmembrane proteins (SsuC) and a solute-binding protein (SsuA).

It localises to the cell inner membrane. The catalysed reaction is ATP + H2O + aliphatic sulfonate-[sulfonate-binding protein]Side 1 = ADP + phosphate + aliphatic sulfonateSide 2 + [sulfonate-binding protein]Side 1.. Functionally, part of the ABC transporter complex SsuABC involved in aliphatic sulfonates import. Responsible for energy coupling to the transport system. This Burkholderia thailandensis (strain ATCC 700388 / DSM 13276 / CCUG 48851 / CIP 106301 / E264) protein is Aliphatic sulfonates import ATP-binding protein SsuB.